Consider the following 459-residue polypeptide: Cysteine--tRNA ligase (459 aa).

Position 28 (C28) interacts with Zn(2+). Residues 30–40 (VTVYDLCHIGH) carry the 'HIGH' region motif. 3 residues coordinate Zn(2+): C209, H234, and E238. Residues 266–270 (KMSKS) carry the 'KMSKS' region motif. ATP is bound at residue K269.

Belongs to the class-I aminoacyl-tRNA synthetase family. As to quaternary structure, monomer. It depends on Zn(2+) as a cofactor.

Its subcellular location is the cytoplasm. The catalysed reaction is tRNA(Cys) + L-cysteine + ATP = L-cysteinyl-tRNA(Cys) + AMP + diphosphate. The polypeptide is Cysteine--tRNA ligase (cysS) (Haemophilus influenzae (strain ATCC 51907 / DSM 11121 / KW20 / Rd)).